Consider the following 120-residue polypeptide: Glycine cleavage system H protein (120 aa).

Positions 17-99 (VATVGITEHA…QGAAWFFKLK (83 aa)) constitute a Lipoyl-binding domain. Residue Lys-58 is modified to N6-lipoyllysine.

The protein belongs to the GcvH family. As to quaternary structure, the glycine cleavage system is composed of four proteins: P, T, L and H. Requires (R)-lipoate as cofactor.

Its function is as follows. The glycine cleavage system catalyzes the degradation of glycine. The H protein shuttles the methylamine group of glycine from the P protein to the T protein. In Sinorhizobium medicae (strain WSM419) (Ensifer medicae), this protein is Glycine cleavage system H protein.